We begin with the raw amino-acid sequence, 288 residues long: MSIIVKNLTHIYNEGMPFASKALDDVSFEIKDRDFVGLIGHTGSGKSTLIQHLNGLLKPSSGEIFINDFNITDKNLNLTEIRKRVGVVFQYPEYQLFEETIDKDIAFGPSNLGLEESEIHNRVKASMEAVGLDYEGFKDKSPFELSGGQKRRVAIAGVIAMNPEVLILDEPTAGLDPGGRDEIFNLIKDLHEKKNMTIILSSHSMDDMAKLAKTLIVMNHGSVEFMGTPREVFKSNASKLKDIGLDIPQVLELALKLREKGFDISEDILTLEEAKQEILKVVRGRGLC.

Positions 3–245 constitute an ABC transporter domain; the sequence is IIVKNLTHIY…NASKLKDIGL (243 aa). 40–47 serves as a coordination point for ATP; that stretch reads GHTGSGKS.

The protein belongs to the ABC transporter superfamily. Energy-coupling factor EcfA family. Forms a stable energy-coupling factor (ECF) transporter complex composed of 2 membrane-embedded substrate-binding proteins (S component), 2 ATP-binding proteins (A component) and 2 transmembrane proteins (T component).

It is found in the cell membrane. Functionally, ATP-binding (A) component of a common energy-coupling factor (ECF) ABC-transporter complex. Unlike classic ABC transporters this ECF transporter provides the energy necessary to transport a number of different substrates. The polypeptide is Energy-coupling factor transporter ATP-binding protein EcfA2 (Clostridioides difficile (strain 630) (Peptoclostridium difficile)).